We begin with the raw amino-acid sequence, 305 residues long: uncharacterized protein (305 aa).

Residues 53 to 185 form a disordered region; the sequence is SGRIGDGDDG…TGPRSSRTVG (133 aa). Composition is skewed to basic and acidic residues over residues 95–116 and 128–142; these read VEER…ERPT and GSER…RSEG. A compositionally biased stretch (polar residues) spans 161–171; that stretch reads GNTQAPSQSAE. The RING-type; atypical zinc finger occupies 260–302; that stretch reads CAICMSNFIKNQRLRVLPCDHRFHVGCVDKWLLGHSNKCPVCR.

This is an uncharacterized protein from Encephalitozoon cuniculi (strain GB-M1) (Microsporidian parasite).